We begin with the raw amino-acid sequence, 116 residues long: Venom protein 54.1 (116 aa).

The signal sequence occupies residues 1–19 (MNFQVFSLIFFNFVYYCSC).

Post-translationally, contains 3 disulfide bonds. As to expression, expressed by the venom gland.

Its subcellular location is the secreted. This is Venom protein 54.1 from Lychas mucronatus (Chinese swimming scorpion).